Here is a 644-residue protein sequence, read N- to C-terminus: Transcription factor cep-1 (644 aa).

Residues 223–418 (EKWMEIDVLK…NFCEREDAKQ (196 aa)) mediate DNA binding. 4 residues coordinate Zn(2+): Cys307, His310, Cys361, and Cys365. The required for tertiary structure stability of the protein stretch occupies residues 528–555 (TNYSFRTLTLSTAEYTKVVEFLAREAKV).

This sequence belongs to the p53 family. As to quaternary structure, homodimer. Interacts (via C-terminus domain) with prmt-5; not methylated by prmt-5. Interacts with cbp-1 (via HAT domain); cep-1 transcriptional activity may be inhibited by interaction with methylated cbp-1. Component of a complex that contains prmt-5 and cbp-1. Interacts with ape-1; the interaction inhibits pro-apoptotic activity of cep-1. The cofactor is Zn(2+). In terms of processing, phosphorylated in response to IR-induced DNA damage which is thought to be mediated by akt-1. Expressed in pharyngeal muscle and neurons.

The protein localises to the nucleus. Functionally, transcriptional activator that binds the same DNA consensus sequence as p53. Has a role in normal development to ensure proper meiotic chromosome segregation. Promotes apoptosis under conditions of cellular and genotoxic stress in response to DNA damage, hypoxia, or starvation. Regulates germline apoptosis in response to DNA damage. Its pro-apoptotic activity is inhibited when bound to ape-1 in vitro. Plays a role in cell cycle arrest in the germline in response to DNA damage by UV-C light. However, not required for survival in response to DNA damage induced by UV-C light, indicating that it is unlikely to be involved in DNA repair. Required for induction of ced-13 in response to DNA damage. Regulates DNA damage-induced apoptosis by inducing transcription of the programmed cell death activator egl-1. Regulates germline proliferation by activating phg-1. Modulates lifespan. The chain is Transcription factor cep-1 from Caenorhabditis elegans.